The primary structure comprises 205 residues: Latherin (205 aa).

A disulfide bond links cysteine 133 and cysteine 176.

The protein belongs to the BPI/LBP/Plunc superfamily. Plunc family. As to quaternary structure, monomer.

It localises to the secreted. Its function is as follows. Major protein in sweat, has surfactant properties. The chain is Latherin (LATH) from Equus quagga burchellii (Burchell's zebra).